Reading from the N-terminus, the 304-residue chain is WW domain-binding protein 1 (304 aa).

The tract at residues 1–26 is disordered; it reads MARASSRNSSEEAWGSLQAPQQQQSP. Short sequence motifs (PPxY motif) lie at residues 159-162 and 172-176; these read PPAY and PPPPY. 2 disordered regions span residues 206 to 235 and 252 to 304; these read TNVEGVSSQQSALPHQEGEPRAGLSPVHIP and CPCP…GDIP. Residues 209 to 218 are compositionally biased toward polar residues; the sequence is EGVSSQQSAL.

Binds to the WW domain of YAP1, WWP1 and WWP2. Interacts with WWOX. Interacts with NEDD4.

The protein is WW domain-binding protein 1 (Wbp1) of Mus musculus (Mouse).